The sequence spans 110 residues: Bowman-Birk type proteinase inhibitor (110 aa).

The first 28 residues, methionine 1 to alanine 28, serve as a signal peptide directing secretion. Positions arginine 29–asparagine 42 are excised as a propeptide. Disulfide bonds link cysteine 50–cysteine 103, cysteine 51–cysteine 66, cysteine 54–cysteine 99, cysteine 56–cysteine 64, cysteine 73–cysteine 80, cysteine 77–cysteine 92, and cysteine 82–cysteine 90.

Monomer.

Inhibitor of trypsin and of chymotrypsin. This is Bowman-Birk type proteinase inhibitor from Lens culinaris (Lentil).